Here is a 145-residue protein sequence, read N- to C-terminus: uncharacterized protein (145 aa).

Position 67 is a phosphoserine (S67).

As to expression, expressed in retina and retinoblastoma.

This is an uncharacterized protein from Homo sapiens (Human).